The following is a 295-amino-acid chain: Phosphatidylserine decarboxylase proenzyme (295 aa).

Catalysis depends on charge relay system; for autoendoproteolytic cleavage activity residues D113, H169, and S256. Catalysis depends on S256, which acts as the Schiff-base intermediate with substrate; via pyruvic acid; for decarboxylase activity. S256 carries the post-translational modification Pyruvic acid (Ser); by autocatalysis.

This sequence belongs to the phosphatidylserine decarboxylase family. PSD-B subfamily. Prokaryotic type II sub-subfamily. In terms of assembly, heterodimer of a large membrane-associated beta subunit and a small pyruvoyl-containing alpha subunit. Requires pyruvate as cofactor. Post-translationally, is synthesized initially as an inactive proenzyme. Formation of the active enzyme involves a self-maturation process in which the active site pyruvoyl group is generated from an internal serine residue via an autocatalytic post-translational modification. Two non-identical subunits are generated from the proenzyme in this reaction, and the pyruvate is formed at the N-terminus of the alpha chain, which is derived from the carboxyl end of the proenzyme. The autoendoproteolytic cleavage occurs by a canonical serine protease mechanism, in which the side chain hydroxyl group of the serine supplies its oxygen atom to form the C-terminus of the beta chain, while the remainder of the serine residue undergoes an oxidative deamination to produce ammonia and the pyruvoyl prosthetic group on the alpha chain. During this reaction, the Ser that is part of the protease active site of the proenzyme becomes the pyruvoyl prosthetic group, which constitutes an essential element of the active site of the mature decarboxylase.

The protein localises to the cell membrane. It catalyses the reaction a 1,2-diacyl-sn-glycero-3-phospho-L-serine + H(+) = a 1,2-diacyl-sn-glycero-3-phosphoethanolamine + CO2. It functions in the pathway phospholipid metabolism; phosphatidylethanolamine biosynthesis; phosphatidylethanolamine from CDP-diacylglycerol: step 2/2. Catalyzes the formation of phosphatidylethanolamine (PtdEtn) from phosphatidylserine (PtdSer). The sequence is that of Phosphatidylserine decarboxylase proenzyme from Clostridium novyi (strain NT).